Here is a 441-residue protein sequence, read N- to C-terminus: Trigger factor (441 aa).

Positions 163–248 (GDQVVFDFVG…IKEVKKPVPA (86 aa)) constitute a PPIase FKBP-type domain.

The protein belongs to the FKBP-type PPIase family. Tig subfamily.

It localises to the cytoplasm. It carries out the reaction [protein]-peptidylproline (omega=180) = [protein]-peptidylproline (omega=0). Involved in protein export. Acts as a chaperone by maintaining the newly synthesized protein in an open conformation. Functions as a peptidyl-prolyl cis-trans isomerase. The sequence is that of Trigger factor from Jannaschia sp. (strain CCS1).